The primary structure comprises 276 residues: Putative phosphoenolpyruvate synthase regulatory protein (276 aa).

156–163 (GVSRSGKT) lines the ADP pocket.

The protein belongs to the pyruvate, phosphate/water dikinase regulatory protein family. PSRP subfamily.

The catalysed reaction is [pyruvate, water dikinase] + ADP = [pyruvate, water dikinase]-phosphate + AMP + H(+). The enzyme catalyses [pyruvate, water dikinase]-phosphate + phosphate + H(+) = [pyruvate, water dikinase] + diphosphate. In terms of biological role, bifunctional serine/threonine kinase and phosphorylase involved in the regulation of the phosphoenolpyruvate synthase (PEPS) by catalyzing its phosphorylation/dephosphorylation. This chain is Putative phosphoenolpyruvate synthase regulatory protein, found in Acidovorax ebreus (strain TPSY) (Diaphorobacter sp. (strain TPSY)).